Consider the following 208-residue polypeptide: Large ribosomal subunit protein uL4 (208 aa).

The tract at residues 51-79 (AKERAEVSFSTKKLKKQKGTGGARAGSRK) is disordered.

Belongs to the universal ribosomal protein uL4 family. In terms of assembly, part of the 50S ribosomal subunit.

Functionally, one of the primary rRNA binding proteins, this protein initially binds near the 5'-end of the 23S rRNA. It is important during the early stages of 50S assembly. It makes multiple contacts with different domains of the 23S rRNA in the assembled 50S subunit and ribosome. Its function is as follows. Forms part of the polypeptide exit tunnel. This is Large ribosomal subunit protein uL4 from Cytophaga hutchinsonii (strain ATCC 33406 / DSM 1761 / CIP 103989 / NBRC 15051 / NCIMB 9469 / D465).